Reading from the N-terminus, the 359-residue chain is Peptide chain release factor 1 (359 aa).

Gln-235 bears the N5-methylglutamine mark. The disordered stretch occupies residues 283 to 309 (QKAESERSQARRSQVGSGDRSERIRTY).

Belongs to the prokaryotic/mitochondrial release factor family. Methylated by PrmC. Methylation increases the termination efficiency of RF1.

Its subcellular location is the cytoplasm. Its function is as follows. Peptide chain release factor 1 directs the termination of translation in response to the peptide chain termination codons UAG and UAA. The polypeptide is Peptide chain release factor 1 (Brucella melitensis biotype 2 (strain ATCC 23457)).